The sequence spans 421 residues: F-box protein At2g17690 (421 aa).

The F-box domain maps to 2 to 50; the sequence is GDWSKLPEELLGLIALRLYSVIELIRFRSICKSWRSSASGVNKNHSLSS.

In terms of biological role, involved in heat stress response. Contributes to recovery from heat stress. In Arabidopsis thaliana (Mouse-ear cress), this protein is F-box protein At2g17690.